Consider the following 1229-residue polypeptide: Membrane-anchored lipid-binding protein SIP3 (1229 aa).

At 1 to 1066 the chain is on the cytoplasmic side; sequence MSVHGRDPKK…AEKFSRINRM (1066 aa). The 115-residue stretch at 309 to 423 folds into the PH domain; it reads SPEKSGWLYM…WLIAFEATKK (115 aa). One can recognise a VASt domain in the interval 771 to 976; the sequence is EYSITYNHEY…VLRYYLEKIG (206 aa). A helical membrane pass occupies residues 1067-1087; it reads MVVGLLASIMINILLSEKASV. Residues 1088 to 1229 lie on the Lumenal side of the membrane; the sequence is PYWSIKRAEK…ELEKLRPPIT (142 aa). The N-linked (GlcNAc...) asparagine glycan is linked to N1206.

The protein belongs to the SIP3 family. In terms of assembly, interacts with SNF1.

It localises to the endoplasmic reticulum membrane. May be involved in sterol transfer between intracellular membranes. This Saccharomyces cerevisiae (strain ATCC 204508 / S288c) (Baker's yeast) protein is Membrane-anchored lipid-binding protein SIP3.